A 450-amino-acid polypeptide reads, in one-letter code: Cyclic GMP-AMP phosphodiesterase SMPDL3A (450 aa).

Residues 1-22 form the signal peptide; that stretch reads MARLGALVCCLLAAWHCRPGLG. Residues D42 and H44 each coordinate Zn(2+). C59 and C78 are oxidised to a cystine. Position 107 (D107) interacts with Zn(2+). Residue H111 coordinates ATP. 2 N-linked (GlcNAc...) asparagine glycosylation sites follow: N124 and N128. Position 148 (N148) interacts with Zn(2+). Positions 148 and 149 each coordinate ATP. 2 N-linked (GlcNAc...) asparagine glycosylation sites follow: N219 and N235. Zn(2+)-binding residues include H249, H290, and H292. N-linked (GlcNAc...) asparagine glycans are attached at residues N353 and N370. 2 disulfides stabilise this stretch: C417/C421 and C427/C440.

The protein belongs to the acid sphingomyelinase family. Monomer. Homodimer; homodimerizes following 2',3'-cGAMP-binding. Requires Zn(2+) as cofactor.

It localises to the secreted. The catalysed reaction is 2',3'-cGAMP + H2O = 5'-pGpA(2'-5') + H(+). The enzyme catalyses 5'-pGpA(2'-5') + H2O = 5'-GpA(2'-5') + phosphate. It carries out the reaction a ribonucleoside 5'-triphosphate + H2O = a ribonucleoside 5'-diphosphate + phosphate + H(+). It catalyses the reaction ATP + H2O = ADP + phosphate + H(+). Its function is as follows. Cyclic-nucleotide phosphodiesterase that acts as a negative regulator of innate immunity by mediating degradation of 2',3'-cGAMP, thereby inhibiting the cGAS-STING signaling. Specifically linearizes 2',3'-cGAMP into 2'5'-bond pGpA and further hydrolyzes pGpA to produce GpA. Also has in vitro nucleotide phosphodiesterase activity with nucleoside triphosphates, such as ATP. Has in vitro activity with p-nitrophenyl-TMP. Has lower activity with nucleoside diphosphates, and no activity with nucleoside monophosphates. Has in vitro activity with CDP-choline, giving rise to CMP and phosphocholine. Has in vitro activity with CDP-ethanolamine. Does not have sphingomyelin phosphodiesterase activity. This is Cyclic GMP-AMP phosphodiesterase SMPDL3A (SMPDL3A) from Bos taurus (Bovine).